We begin with the raw amino-acid sequence, 225 residues long: Small ribosomal subunit protein uS2 (225 aa).

This sequence belongs to the universal ribosomal protein uS2 family.

This chain is Small ribosomal subunit protein uS2, found in Metallosphaera sedula (strain ATCC 51363 / DSM 5348 / JCM 9185 / NBRC 15509 / TH2).